A 45-amino-acid polypeptide reads, in one-letter code: Large ribosomal subunit protein bL34c (45 aa).

The segment at 1–21 (MIQRTLTGTNRKKTKRSGFRS) is disordered. Residues 10 to 19 (NRKKTKRSGF) are compositionally biased toward basic residues.

The protein belongs to the bacterial ribosomal protein bL34 family.

The protein localises to the plastid. It localises to the chloroplast. The chain is Large ribosomal subunit protein bL34c (rpl34) from Cyanidium caldarium (Red alga).